The primary structure comprises 367 residues: Alcohol dehydrogenase 2 (367 aa).

Zn(2+)-binding residues include cysteine 48, histidine 74, cysteine 107, cysteine 110, cysteine 113, cysteine 121, and cysteine 163. NAD(+) is bound by residues 187-193 (GAGGGLG), aspartate 212, lysine 216, 286-288 (VGI), and arginine 361.

The protein belongs to the zinc-containing alcohol dehydrogenase family. As to quaternary structure, homotetramer. Zn(2+) serves as cofactor.

It is found in the cytoplasm. It catalyses the reaction a primary alcohol + NAD(+) = an aldehyde + NADH + H(+). The catalysed reaction is a secondary alcohol + NAD(+) = a ketone + NADH + H(+). The sequence is that of Alcohol dehydrogenase 2 (alcB) from Emericella nidulans (strain FGSC A4 / ATCC 38163 / CBS 112.46 / NRRL 194 / M139) (Aspergillus nidulans).